We begin with the raw amino-acid sequence, 364 residues long: Aminomethyltransferase (364 aa).

Belongs to the GcvT family. As to quaternary structure, the glycine cleavage system is composed of four proteins: P, T, L and H.

It catalyses the reaction N(6)-[(R)-S(8)-aminomethyldihydrolipoyl]-L-lysyl-[protein] + (6S)-5,6,7,8-tetrahydrofolate = N(6)-[(R)-dihydrolipoyl]-L-lysyl-[protein] + (6R)-5,10-methylene-5,6,7,8-tetrahydrofolate + NH4(+). In terms of biological role, the glycine cleavage system catalyzes the degradation of glycine. The polypeptide is Aminomethyltransferase (Escherichia coli O127:H6 (strain E2348/69 / EPEC)).